A 329-amino-acid polypeptide reads, in one-letter code: Peroxidase 51 (329 aa).

Residues 1-25 form the signal peptide; that stretch reads MVVMNKTNLLLLILSLFLAINLSSA. Cystine bridges form between C36–C119, C69–C74, C125–C325, and C204–C236. The active-site Proton acceptor is H67. Residues D68, V71, G73, D75, and S77 each coordinate Ca(2+). Position 167 (P167) interacts with substrate. H197 lines the heme b pocket. T198 contacts Ca(2+). The N-linked (GlcNAc...) asparagine glycan is linked to N215. Ca(2+) is bound by residues D249, T252, and D257.

This sequence belongs to the peroxidase family. Classical plant (class III) peroxidase subfamily. Heme b is required as a cofactor. Requires Ca(2+) as cofactor.

It localises to the secreted. The enzyme catalyses 2 a phenolic donor + H2O2 = 2 a phenolic radical donor + 2 H2O. Its function is as follows. Removal of H(2)O(2), oxidation of toxic reductants, biosynthesis and degradation of lignin, suberization, auxin catabolism, response to environmental stresses such as wounding, pathogen attack and oxidative stress. These functions might be dependent on each isozyme/isoform in each plant tissue. The polypeptide is Peroxidase 51 (PER51) (Arabidopsis thaliana (Mouse-ear cress)).